An 831-amino-acid chain; its full sequence is Multiphosphoryl transfer protein (831 aa).

The HPr domain maps to 1-90 (MLTIQFLCPL…EYIQVRFIDS (90 aa)). His15 (pros-phosphohistidine intermediate; for HPr activity) is an active-site residue. His15 is subject to Phosphohistidine; by EI. Residues 119–650 (GNVLASGVGV…AVKSQLRQLD (532 aa)) are PTS EI. The active-site Tele-phosphohistidine intermediate; for PTS EI activity is His298. His298 bears the Phosphohistidine; by autocatalysis mark. Phosphoenolpyruvate is bound by residues Arg405 and Arg441. Positions 540 and 564 each coordinate Mg(2+). Phosphoenolpyruvate contacts are provided by residues 563-564 (ND) and Arg574. Catalysis depends on Cys611, which acts as the Proton donor; for EI activity. Positions 685–828 (PLLALENIFV…QSILTLLETE (144 aa)) constitute a PTS EIIA type-2 domain. The active-site Tele-phosphohistidine intermediate; for PTS EIIA activity is the His747. His747 is modified (phosphohistidine; by HPr).

It belongs to the PEP-utilizing enzyme family. It depends on Mg(2+) as a cofactor.

Its subcellular location is the cytoplasm. It catalyses the reaction L-histidyl-[protein] + phosphoenolpyruvate = N(pros)-phospho-L-histidyl-[protein] + pyruvate. The enzyme catalyses D-fructose(out) + N(pros)-phospho-L-histidyl-[protein] = D-fructose 1-phosphate(in) + L-histidyl-[protein]. Multifunctional protein that includes general (non sugar-specific) and sugar-specific components of the phosphoenolpyruvate-dependent sugar phosphotransferase system (sugar PTS). This major carbohydrate active transport system catalyzes the phosphorylation of incoming sugar substrates concomitantly with their translocation across the cell membrane. The enzyme II FryABC PTS system is involved in fructose transport. This Escherichia coli O6:H1 (strain CFT073 / ATCC 700928 / UPEC) protein is Multiphosphoryl transfer protein (fryA).